Consider the following 70-residue polypeptide: MTKHDHGLKEKVEGTIDKVKGEVKEVVGKVTDNKKLQAEGKWDKVKGTAKDTVGNVKEKVHEYKEHKKEK.

This sequence belongs to the UPF0337 (CsbD) family.

The chain is UPF0337 protein BC_3635 from Bacillus cereus (strain ATCC 14579 / DSM 31 / CCUG 7414 / JCM 2152 / NBRC 15305 / NCIMB 9373 / NCTC 2599 / NRRL B-3711).